An 898-amino-acid chain; its full sequence is Serine/threonine-protein kinase TAO3 (898 aa).

The region spanning 24–277 (FIDLHEIGHG…AAELLRHDFI (254 aa)) is the Protein kinase domain. ATP contacts are provided by residues 30-38 (IGHGSFGAV) and K53. The active-site Proton acceptor is the D147. 2 disordered regions span residues 316–372 (TRNG…EVMD) and 405–424 (DEAGHGDPRPEPRPTQSVQS). Residues S324, S331, S343, S346, and S349 each carry the phosphoserine modification. Low complexity predominate over residues 349–366 (SIPSVSVSTGSRSSSVNS). Position 357 is a phosphothreonine (T357). The residue at position 359 (S359) is a Phosphoserine. A compositionally biased stretch (basic and acidic residues) spans 405–416 (DEAGHGDPRPEP). S442 is subject to Phosphoserine. Coiled-coil stretches lie at residues 452-502 (EQEN…THAN), 548-649 (FLES…HAML), and 753-871 (ILKT…QERE). The tract at residues 565 to 596 (EEMNEDHSTPKKEKQERISKHKENLQHTQAEE) is disordered. K830 carries the post-translational modification N6-acetyllysine.

Belongs to the protein kinase superfamily. STE Ser/Thr protein kinase family. STE20 subfamily. As to quaternary structure, self-associates. Interacts with ERN1 and TRAF2. Interaction with TRAF2 is facilitated under ER stress conditions, such as treatment with tunicamycin, and may promote TRAF2 phosphorylation. Interacts (via N-terminus) with STK25; the interaction promotes STK25 abundance at the level of protein expression and/or stability. Post-translationally, autophosphorylated. Phosphorylation at Ser-324 by ATM following DNA damage is required for activation of the p38/MAPK14 stress-activated MAPK cascade. Phosphorylated at Ser-324 and on Tyr residues during T cell activation. Phosphorylated by LRRK2. Ubiquitously expressed, with a higher expression in the retina.

The protein localises to the cytoplasm. It localises to the cell membrane. Its subcellular location is the membrane raft. The protein resides in the lipid droplet. The catalysed reaction is L-seryl-[protein] + ATP = O-phospho-L-seryl-[protein] + ADP + H(+). It catalyses the reaction L-threonyl-[protein] + ATP = O-phospho-L-threonyl-[protein] + ADP + H(+). Functionally, serine/threonine-protein kinase that acts as a regulator of the p38/MAPK14 stress-activated MAPK cascade and of the MAPK8/JNK cascade. In response to DNA damage, involved in the G2/M transition DNA damage checkpoint by activating the p38/MAPK14 stress-activated MAPK cascade, probably by mediating phosphorylation of upstream MAP2K3 and MAP2K6 kinases. Inhibits basal activity of the MAPK8/JNK cascade and diminishes its activation in response to epidermal growth factor (EGF). Positively regulates canonical T cell receptor (TCR) signaling by preventing early PTPN6/SHP1-mediated inactivation of LCK, ensuring sustained TCR signaling that is required for optimal activation and differentiation of T cells. Phosphorylates PTPN6/SHP1 on 'Thr-396', leading to its polyubiquitination and subsequent proteasomal degradation. Required for cell surface expression of metalloprotease ADAM10 on type 1 transitional B cells which is necessary for their NOTCH-mediated development into marginal zone B cells. Also required for the NOTCH-mediated terminal differentiation of splenic conventional type 2 dendritic cells. Positively regulates osteoblast differentiation by acting as an upstream activator of the JNK pathway. Promotes JNK signaling in hepatocytes and positively regulates hepatocyte lipid storage by inhibiting beta-oxidation and triacylglycerol secretion while enhancing lipid synthesis. Restricts age-associated inflammation by negatively regulating differentiation of macrophages and their production of pro-inflammatory cytokines. Plays a role in negatively regulating the abundance of regulatory T cells in white adipose tissue. This Rattus norvegicus (Rat) protein is Serine/threonine-protein kinase TAO3 (Taok3).